We begin with the raw amino-acid sequence, 590 residues long: Aspartate--tRNA(Asp/Asn) ligase (590 aa).

Glu-175 is an L-aspartate binding site. The interval 199-202 (QQYK) is aspartate. L-aspartate contacts are provided by Arg-221 and His-450. 221-223 (RDE) provides a ligand contact to ATP. ATP is bound at residue Glu-484. An L-aspartate-binding site is contributed by Arg-491. 536–539 (GVDR) provides a ligand contact to ATP.

Belongs to the class-II aminoacyl-tRNA synthetase family. Type 1 subfamily. Homodimer.

It localises to the cytoplasm. The catalysed reaction is tRNA(Asx) + L-aspartate + ATP = L-aspartyl-tRNA(Asx) + AMP + diphosphate. In terms of biological role, aspartyl-tRNA synthetase with relaxed tRNA specificity since it is able to aspartylate not only its cognate tRNA(Asp) but also tRNA(Asn). Reaction proceeds in two steps: L-aspartate is first activated by ATP to form Asp-AMP and then transferred to the acceptor end of tRNA(Asp/Asn). The chain is Aspartate--tRNA(Asp/Asn) ligase from Bradyrhizobium diazoefficiens (strain JCM 10833 / BCRC 13528 / IAM 13628 / NBRC 14792 / USDA 110).